The following is a 131-amino-acid chain: Small ribosomal subunit protein uS8 (131 aa).

Belongs to the universal ribosomal protein uS8 family. In terms of assembly, part of the 30S ribosomal subunit. Contacts proteins S5 and S12.

One of the primary rRNA binding proteins, it binds directly to 16S rRNA central domain where it helps coordinate assembly of the platform of the 30S subunit. The chain is Small ribosomal subunit protein uS8 from Paracidovorax citrulli (strain AAC00-1) (Acidovorax citrulli).